Consider the following 777-residue polypeptide: Serine/threonine-protein kinase PLK4 (777 aa).

The Protein kinase domain maps to 14–268 (YEVQHLLGKG…LEQVLRHPFL (255 aa)). Residues 20 to 28 (LGKGGFASV) and lysine 43 each bind ATP. Aspartate 139 functions as the Proton acceptor in the catalytic mechanism. Positions 371-381 (TNNLAPFTSDS) are enriched in polar residues. Residues 371 to 390 (TNNLAPFTSDSDMIPSPVGE) are disordered. The Cryptic POLO box 1 (CPB1) domain maps to 390–507 (EKRLLMPPLE…ARFVGLVKSK (118 aa)). The 104-residue stretch at 508-611 (TPKITFFSSL…GRRPAADMHA (104 aa)) folds into the Cryptic POLO box 2 (CPB2) domain. Positions 669–748 (PIKRITVPEI…MPQLQMKLKC (80 aa)) constitute a POLO box domain.

It belongs to the protein kinase superfamily. Ser/Thr protein kinase family. CDC5/Polo subfamily. Homodimer. In terms of processing, ubiquitinated by the SCF(Slimb) ubiquitin ligase complex; leading to its degradation by the proteasome during interphase and regulating centriole number and ensuring the block to centriole reduplication.

Its subcellular location is the cytoplasm. It localises to the cytoskeleton. The protein resides in the microtubule organizing center. The protein localises to the centrosome. It is found in the centriole. The catalysed reaction is L-seryl-[protein] + ATP = O-phospho-L-seryl-[protein] + ADP + H(+). It catalyses the reaction L-threonyl-[protein] + ATP = O-phospho-L-threonyl-[protein] + ADP + H(+). Its function is as follows. Serine/threonine-protein kinase that plays a central role in centriole duplication. Able to trigger procentriole formation on the surface of the mother centriole cylinder, using mother centriole as a platform, leading to the recruitment of centriole biogenesis proteins such as sas-6. When overexpressed, it is able to induce centrosome amplification through the simultaneous generation of multiple procentrioles adjoining each parental centriole during S phase. Centrosome amplification following overexpression can initiate tumorigenesis, highlighting the importance of centrosome regulation in cancers. This is Serine/threonine-protein kinase PLK4 (SAK) from Drosophila pseudoobscura pseudoobscura (Fruit fly).